We begin with the raw amino-acid sequence, 348 residues long: Fructose-1,6-bisphosphatase class 1 (348 aa).

Mg(2+)-binding residues include glutamate 92, aspartate 111, leucine 113, and aspartate 114. Residues 114-117 (DGSS) and asparagine 204 each bind substrate. Glutamate 276 is a binding site for Mg(2+).

Belongs to the FBPase class 1 family. As to quaternary structure, homotetramer. It depends on Mg(2+) as a cofactor.

It localises to the cytoplasm. It catalyses the reaction beta-D-fructose 1,6-bisphosphate + H2O = beta-D-fructose 6-phosphate + phosphate. It participates in carbohydrate biosynthesis; gluconeogenesis. This Methylorubrum extorquens (strain CM4 / NCIMB 13688) (Methylobacterium extorquens) protein is Fructose-1,6-bisphosphatase class 1.